The sequence spans 208 residues: NAD(P)H dehydrogenase (quinone) (208 aa).

The Flavodoxin-like domain maps to 4-199; sequence VNVIFHSIHG…AMARYQGRHV (196 aa). Residues 10–15 and 87–89 contribute to the FMN site; these read SIHGHT and TRY. W107 contacts substrate. FMN contacts are provided by residues 122–128 and H143; that span reads SSGTQHG.

It belongs to the WrbA family. FMN is required as a cofactor.

It carries out the reaction a quinone + NADH + H(+) = a quinol + NAD(+). The enzyme catalyses a quinone + NADPH + H(+) = a quinol + NADP(+). In Methanosarcina barkeri (strain Fusaro / DSM 804), this protein is NAD(P)H dehydrogenase (quinone).